We begin with the raw amino-acid sequence, 219 residues long: Small ribosomal subunit protein uS3 (219 aa).

The KH type-2 domain maps to 38–106 (IREYITARLK…RVHINILEVK (69 aa)).

This sequence belongs to the universal ribosomal protein uS3 family. In terms of assembly, part of the 30S ribosomal subunit. Forms a tight complex with proteins S10 and S14.

Binds the lower part of the 30S subunit head. Binds mRNA in the 70S ribosome, positioning it for translation. This chain is Small ribosomal subunit protein uS3, found in Bacillus cytotoxicus (strain DSM 22905 / CIP 110041 / 391-98 / NVH 391-98).